A 227-amino-acid chain; its full sequence is Cytochrome c oxidase subunit 2 (227 aa).

Residues 1 to 14 (MAYTFQLGLQDATS) are Mitochondrial intermembrane-facing. Residues 15 to 45 (PIMEELTNFHDHTLMIVFLISSLVLYVISLM) form a helical membrane-spanning segment. The Mitochondrial matrix segment spans residues 46 to 59 (LTTKLTHTNTMDAQ). The chain crosses the membrane as a helical span at residues 60–87 (EVETIWTILPAVILILIALPSLRILYMM). The Mitochondrial intermembrane segment spans residues 88 to 227 (DEINNPVLTV…HFENWSASMI (140 aa)). 6 residues coordinate Cu cation: His-161, Cys-196, Glu-198, Cys-200, His-204, and Met-207. Position 198 (Glu-198) interacts with Mg(2+).

It belongs to the cytochrome c oxidase subunit 2 family. As to quaternary structure, component of the cytochrome c oxidase (complex IV, CIV), a multisubunit enzyme composed of 14 subunits. The complex is composed of a catalytic core of 3 subunits MT-CO1, MT-CO2 and MT-CO3, encoded in the mitochondrial DNA, and 11 supernumerary subunits COX4I, COX5A, COX5B, COX6A, COX6B, COX6C, COX7A, COX7B, COX7C, COX8 and NDUFA4, which are encoded in the nuclear genome. The complex exists as a monomer or a dimer and forms supercomplexes (SCs) in the inner mitochondrial membrane with NADH-ubiquinone oxidoreductase (complex I, CI) and ubiquinol-cytochrome c oxidoreductase (cytochrome b-c1 complex, complex III, CIII), resulting in different assemblies (supercomplex SCI(1)III(2)IV(1) and megacomplex MCI(2)III(2)IV(2)). Found in a complex with TMEM177, COA6, COX18, COX20, SCO1 and SCO2. Interacts with TMEM177 in a COX20-dependent manner. Interacts with COX20. Interacts with COX16. Requires Cu cation as cofactor.

The protein resides in the mitochondrion inner membrane. The enzyme catalyses 4 Fe(II)-[cytochrome c] + O2 + 8 H(+)(in) = 4 Fe(III)-[cytochrome c] + 2 H2O + 4 H(+)(out). Component of the cytochrome c oxidase, the last enzyme in the mitochondrial electron transport chain which drives oxidative phosphorylation. The respiratory chain contains 3 multisubunit complexes succinate dehydrogenase (complex II, CII), ubiquinol-cytochrome c oxidoreductase (cytochrome b-c1 complex, complex III, CIII) and cytochrome c oxidase (complex IV, CIV), that cooperate to transfer electrons derived from NADH and succinate to molecular oxygen, creating an electrochemical gradient over the inner membrane that drives transmembrane transport and the ATP synthase. Cytochrome c oxidase is the component of the respiratory chain that catalyzes the reduction of oxygen to water. Electrons originating from reduced cytochrome c in the intermembrane space (IMS) are transferred via the dinuclear copper A center (CU(A)) of subunit 2 and heme A of subunit 1 to the active site in subunit 1, a binuclear center (BNC) formed by heme A3 and copper B (CU(B)). The BNC reduces molecular oxygen to 2 water molecules using 4 electrons from cytochrome c in the IMS and 4 protons from the mitochondrial matrix. This is Cytochrome c oxidase subunit 2 (MT-CO2) from Niviventer culturatus (Oldfield white-bellied rat).